Reading from the N-terminus, the 506-residue chain is Ecdysteroid UDP-glucosyltransferase (506 aa).

Positions 1 to 18 are cleaved as a signal peptide; it reads MTAYLIVFCLCCWSAARS.

The protein belongs to the UDP-glycosyltransferase family.

Functionally, catalyzes the transfer of glucose from UDP-glucose to ecdysteroids which are insect molting hormones. Expression of egt interferes with normal insect development and block molting. The protein is Ecdysteroid UDP-glucosyltransferase (EGT) of Lymantria dispar multicapsid nuclear polyhedrosis virus (LdMNPV).